The sequence spans 432 residues: Trigger factor (432 aa).

Positions 161–246 (EDRVTIDFTG…LKKVEERELP (86 aa)) constitute a PPIase FKBP-type domain.

The protein belongs to the FKBP-type PPIase family. Tig subfamily.

The protein localises to the cytoplasm. It catalyses the reaction [protein]-peptidylproline (omega=180) = [protein]-peptidylproline (omega=0). In terms of biological role, involved in protein export. Acts as a chaperone by maintaining the newly synthesized protein in an open conformation. Functions as a peptidyl-prolyl cis-trans isomerase. The protein is Trigger factor of Klebsiella pneumoniae subsp. pneumoniae (strain ATCC 700721 / MGH 78578).